Here is a 197-residue protein sequence, read N- to C-terminus: Recombination protein RecR (197 aa).

The segment at 54-69 (CQQCNNYTEQTLCTLC) adopts a C4-type zinc-finger fold. Residues 77–172 (TLLCVVESPA…NISQLAHGIP (96 aa)) form the Toprim domain.

The protein belongs to the RecR family.

May play a role in DNA repair. It seems to be involved in an RecBC-independent recombinational process of DNA repair. It may act with RecF and RecO. The polypeptide is Recombination protein RecR (Legionella pneumophila (strain Paris)).